The following is a 96-amino-acid chain: UPF0235 protein ECA3630 (96 aa).

Belongs to the UPF0235 family.

The protein is UPF0235 protein ECA3630 of Pectobacterium atrosepticum (strain SCRI 1043 / ATCC BAA-672) (Erwinia carotovora subsp. atroseptica).